Here is a 719-residue protein sequence, read N- to C-terminus: Exonuclease mut-7 homolog (719 aa).

The segment at methionine 1–glycine 22 is disordered. The 3'-5' exonuclease domain maps to asparagine 575–threonine 629. The disordered stretch occupies residues asparagine 644–leucine 719. Residues arginine 667–histidine 678 are compositionally biased toward basic residues. Polar residues-rich tracts occupy residues aspartate 683–alanine 692 and glutamate 706–leucine 719.

It belongs to the mut-7 family. The cofactor is Mg(2+).

Possesses 3'-5' exoribonuclease activity. Required for 3'-end trimming of AGO1-bound miRNAs. This chain is Exonuclease mut-7 homolog, found in Aedes aegypti (Yellowfever mosquito).